A 396-amino-acid polypeptide reads, in one-letter code: Cytochrome b (396 aa).

A run of 4 helical transmembrane segments spans residues 37-57 (FGSL…ILAM), 81-102 (WLMR…YAHI), 117-137 (WNVG…GYVL), and 182-202 (FFTF…IHIM). Residues histidine 87 and histidine 101 each contribute to the heme b site. Residues histidine 186 and histidine 200 each coordinate heme b. Position 205 (histidine 205) interacts with a ubiquinone. A run of 4 helical transmembrane segments spans residues 230-250 (FKDI…SLLA), 292-312 (LGGV…PFTH), 324-344 (LAQI…WLGG), and 351-371 (FILM…LVFP).

The protein belongs to the cytochrome b family. In terms of assembly, the cytochrome bc1 complex contains 3 respiratory subunits (MT-CYB, CYC1 and UQCRFS1), 2 core proteins (UQCRC1 and UQCRC2) and probably 6 low-molecular weight proteins. The cofactor is heme b.

It is found in the mitochondrion inner membrane. Its function is as follows. Component of the ubiquinol-cytochrome c reductase complex (complex III or cytochrome b-c1 complex) that is part of the mitochondrial respiratory chain. The b-c1 complex mediates electron transfer from ubiquinol to cytochrome c. Contributes to the generation of a proton gradient across the mitochondrial membrane that is then used for ATP synthesis. The sequence is that of Cytochrome b (mt-cyb) from Petromyzon marinus (Sea lamprey).